The following is a 457-amino-acid chain: Gamma-aminobutyric acid receptor subunit gamma-4 (457 aa).

A signal peptide spans 1–21 (MPAMVLLLCLALGPALRSARC). The Extracellular portion of the chain corresponds to 22–256 (ESTEEYDYDY…VSFDLSRRMG (235 aa)). 2 N-linked (GlcNAc...) asparagine glycosylation sites follow: N35 and N112. A disulfide bridge links C173 with C187. An N-linked (GlcNAc...) asparagine glycan is attached at N230. Helical transmembrane passes span 257-279 (YFAI…SFWI), 283-305 (STPA…STIS), and 317-339 (AMDL…YATL). At 340–433 (NYLVGNKKPL…VRIHISRLDS (94 aa)) the chain is on the cytoplasmic side. The chain crosses the membrane as a helical span at residues 434 to 457 (YSRVFFPTAFLLFNIVYWIAYLYL).

The protein belongs to the ligand-gated ion channel (TC 1.A.9) family. Gamma-aminobutyric acid receptor (TC 1.A.9.5) subfamily. GABRG4 sub-subfamily. As to quaternary structure, generally pentameric. There are five types of GABA(A) receptor chains: alpha, beta, gamma, delta, and rho. Abundant in several brain regions, including the ectostriatum, nucleus rotundus and hyperstriatum ventrale.

The protein resides in the postsynaptic cell membrane. It is found in the cell membrane. Its function is as follows. GABA, the major inhibitory neurotransmitter in the vertebrate brain, mediates neuronal inhibition by binding to the GABA/benzodiazepine receptor and opening an integral chloride channel. This chain is Gamma-aminobutyric acid receptor subunit gamma-4 (GABRG4), found in Gallus gallus (Chicken).